The sequence spans 274 residues: 4-diphosphocytidyl-2-C-methyl-D-erythritol kinase (274 aa).

Lys-9 is an active-site residue. Position 91 to 101 (91 to 101 (PAGAGLGGGSS)) interacts with ATP. The active site involves Asp-133.

It belongs to the GHMP kinase family. IspE subfamily.

The catalysed reaction is 4-CDP-2-C-methyl-D-erythritol + ATP = 4-CDP-2-C-methyl-D-erythritol 2-phosphate + ADP + H(+). It participates in isoprenoid biosynthesis; isopentenyl diphosphate biosynthesis via DXP pathway; isopentenyl diphosphate from 1-deoxy-D-xylulose 5-phosphate: step 3/6. Its function is as follows. Catalyzes the phosphorylation of the position 2 hydroxy group of 4-diphosphocytidyl-2C-methyl-D-erythritol. The protein is 4-diphosphocytidyl-2-C-methyl-D-erythritol kinase of Persephonella marina (strain DSM 14350 / EX-H1).